The primary structure comprises 339 residues: MAVTPHHRLYEFAKTALIKIFAFPYATVCDLYCDGGVDTDKWGDAQIGHYIGIDASASGVNDARELWESRKKLFTSEFIELDPSADDFEAQMQEKGIQADIVCCMQHLQLCFESEEHAQKLLNNVSSLLKPGGYFVGIIPDSSTIWTKYQKNVEASHNKGLKTVPNSIRSENYVITFEVEEEKFPFFGKKYQLKFANESMFENHCLVHFPSFMRLAREAGLEYVEIQNLTEFYDDNRTQFAPLLGGYGSSLVDPRGKLVARSFDILGLYSTFVFQKPDPDAMPPIVTPELHDPENDQEEEWLWTQQASMDDGRVSRTDILPPADNEKGILGPGPADMRL.

The mRNA cap 0 methyltransferase domain maps to 1-277 (MAVTPHHRLY…LYSTFVFQKP (277 aa)). Residues Lys-14, Asp-54, and 82-83 (DP) each bind S-adenosyl-L-methionine. Residues 314–339 (VSRTDILPPADNEKGILGPGPADMRL) are disordered.

It belongs to the class I-like SAM-binding methyltransferase superfamily. mRNA cap 0 methyltransferase family.

The protein resides in the nucleus. It carries out the reaction a 5'-end (5'-triphosphoguanosine)-ribonucleoside in mRNA + S-adenosyl-L-methionine = a 5'-end (N(7)-methyl 5'-triphosphoguanosine)-ribonucleoside in mRNA + S-adenosyl-L-homocysteine. MRNA-capping methyltransferase that methylates the N7 position of the added guanosine to the 5'-cap structure of mRNAs. Binds RNA containing 5'-terminal GpppC. The polypeptide is mRNA cap guanine-N(7) methyltransferase 2 (Oryza sativa subsp. japonica (Rice)).